The chain runs to 283 residues: Protein/nucleic acid deglycase HchA (283 aa).

Zn(2+)-binding residues include His86, Glu91, and His123. Cys185 (nucleophile) is an active-site residue.

Belongs to the peptidase C56 family. HchA subfamily. In terms of assembly, homodimer.

It localises to the cytoplasm. It catalyses the reaction N(omega)-(1-hydroxy-2-oxopropyl)-L-arginyl-[protein] + H2O = lactate + L-arginyl-[protein] + H(+). The enzyme catalyses N(6)-(1-hydroxy-2-oxopropyl)-L-lysyl-[protein] + H2O = lactate + L-lysyl-[protein] + H(+). The catalysed reaction is S-(1-hydroxy-2-oxopropyl)-L-cysteinyl-[protein] + H2O = lactate + L-cysteinyl-[protein] + H(+). It carries out the reaction N(omega)-(1-hydroxy-2-oxoethyl)-L-arginyl-[protein] + H2O = L-arginyl-[protein] + glycolate + H(+). It catalyses the reaction N(6)-(1-hydroxy-2-oxoethyl)-L-lysyl-[protein] + H2O = glycolate + L-lysyl-[protein] + H(+). The enzyme catalyses S-(1-hydroxy-2-oxoethyl)-L-cysteinyl-[protein] + H2O = glycolate + L-cysteinyl-[protein] + H(+). The catalysed reaction is N(2)-(1-hydroxy-2-oxopropyl)-dGTP + H2O = lactate + dGTP + H(+). It carries out the reaction N(2)-(1-hydroxy-2-oxopropyl)-GTP + H2O = lactate + GTP + H(+). It catalyses the reaction N(2)-(1-hydroxy-2-oxopropyl)-GDP + H2O = lactate + GDP + H(+). The enzyme catalyses N(2)-(1-hydroxy-2-oxopropyl)-GMP + H2O = lactate + GMP + H(+). The catalysed reaction is N(2)-(1-hydroxy-2-oxoethyl)-dGTP + H2O = dGTP + glycolate + H(+). It carries out the reaction N(2)-(1-hydroxy-2-oxoethyl)-GTP + H2O = glycolate + GTP + H(+). It catalyses the reaction N(2)-(1-hydroxy-2-oxoethyl)-GDP + H2O = glycolate + GDP + H(+). The enzyme catalyses N(2)-(1-hydroxy-2-oxoethyl)-GMP + H2O = glycolate + GMP + H(+). The catalysed reaction is an N(2)-(1-hydroxy-2-oxopropyl)-guanosine in RNA + H2O = a guanosine in RNA + lactate + H(+). It carries out the reaction an N(2)-(1-hydroxy-2-oxopropyl)-2'-deoxyguanosine in DNA + H2O = a 2'-deoxyguanosine in DNA + lactate + H(+). It catalyses the reaction an N(2)-(1-hydroxy-2-oxoethyl)-guanosine in RNA + H2O = a guanosine in RNA + glycolate + H(+). The enzyme catalyses an N(2)-(1-hydroxy-2-oxoethyl)-2'-deoxyguanosine in DNA + H2O = a 2'-deoxyguanosine in DNA + glycolate + H(+). Functionally, protein and nucleotide deglycase that catalyzes the deglycation of the Maillard adducts formed between amino groups of proteins or nucleotides and reactive carbonyl groups of glyoxals. Thus, functions as a protein deglycase that repairs methylglyoxal- and glyoxal-glycated proteins, and releases repaired proteins and lactate or glycolate, respectively. Deglycates cysteine, arginine and lysine residues in proteins, and thus reactivates these proteins by reversing glycation by glyoxals. Acts on early glycation intermediates (hemithioacetals and aminocarbinols), preventing the formation of Schiff bases and advanced glycation endproducts (AGE). Also functions as a nucleotide deglycase able to repair glycated guanine in the free nucleotide pool (GTP, GDP, GMP, dGTP) and in DNA and RNA. Is thus involved in a major nucleotide repair system named guanine glycation repair (GG repair), dedicated to reversing methylglyoxal and glyoxal damage via nucleotide sanitization and direct nucleic acid repair. Plays an important role in protecting cells from carbonyl stress. The protein is Protein/nucleic acid deglycase HchA of Escherichia coli O139:H28 (strain E24377A / ETEC).